The chain runs to 1169 residues: Rabankyrin-5 (1169 aa).

The residue at position 2 (Ala-2) is an N-acetylalanine. The 63-residue stretch at Ser-68–Glu-130 folds into the BTB domain. 5 ANK repeats span residues Lys-217–Gly-247, Asn-255–Met-284, Asn-288–Ala-317, Ala-322–Met-362, and Lys-366–Leu-396. Residue Ser-270 is modified to Phosphoserine. An NPF motif is present at residues Asn-421–Phe-423. 16 ANK repeats span residues Trp-490–Leu-519, Tyr-542–Ala-572, Arg-588–Asp-617, Asp-621–Val-650, Asp-654–Val-683, Lys-687–Cys-716, Cys-724–Ser-753, Asp-769–Ala-798, Glu-802–Val-832, Gln-836–Glu-865, Lys-870–Ser-899, Ser-905–Glu-934, His-938–Ala-967, Asn-971–Ala-1001, Arg-1005–Leu-1037, and Glu-1043–Val-1072. An interaction with RHOD and RAB5A region spans residues Val-650–Thr-759. The FYVE-type zinc-finger motif lies at Trp-1104 to Thr-1164. 8 residues coordinate Zn(2+): Cys-1110, Cys-1113, Cys-1126, Cys-1129, Cys-1134, Cys-1137, Cys-1156, and Cys-1159.

In terms of assembly, interacts with RAB5A (in GTP-bound form). Interacts with RHOD (independent of GTP-loaded status). Interacts with EHD1. Interacts with VPS26A; the interaction is independent of EHD1 and is indicative for an association with the cargo recognition subcomplex of the retromer complex. Expressed in kidney proximal tubule epithelial cells; at protein level.

It localises to the cytoplasm. It is found in the endosome membrane. The protein resides in the cytoplasmic vesicle. Proposed effector of Rab5. Binds to phosphatidylinositol 3-phosphate (PI(3)P). Involved in homotypic early endosome fusion and to a lesser extent in heterotypic fusion of chlathrin-coated vesicles with early endosomes. Required for correct endosomal localization. Involved in the internalization and trafficking of activated tyrosine kinase receptors such as PDGFRB. Regulates the subcellular localization of the retromer complex in a EHD1-dependent manner. Involved in endosome-to-Golgi transport and biosynthetic transport to late endosomes and lysosomes indicative for a regulation of retromer complex-mediated retrograde transport. Involved in macropinocytosis; the function is dependent on Rab5-GTP. The polypeptide is Rabankyrin-5 (Ankfy1) (Mus musculus (Mouse)).